The following is a 1465-amino-acid chain: Gag-Pol polyprotein (1465 aa).

Residue Gly2 is the site of N-myristoyl glycine; by host attachment. The short motif at 16 to 22 (FEHIRLR) is the Nuclear export signal element. The Nuclear localization signal signature appears at 26-32 (KKKYQIK). A disordered region spans residues 116 to 144 (NAERNTTETSSGQKKNDKGVTVPPGGSQN). CCHC-type zinc fingers lie at residues 402-419 (VKCYNCGKFGHMQRQCPE) and 423-440 (MRCLKCGKPGHLAKDCRG). The region spanning 532-603 (IRALLDTGAD…TPINIIGRNI (72 aa)) is the Peptidase A2 domain. Asp537 serves as the catalytic For protease activity; shared with dimeric partner. In terms of domain architecture, Reverse transcriptase spans 659–849 (EGKISKIGGE…PPYEWMGYKL (191 aa)). Mg(2+)-binding residues include Asp725, Asp800, and Asp801. The RT 'primer grip' stretch occupies residues 842–850 (YEWMGYKLW). Positions 1012-1028 (WEQWWADYWQVSWIPDW) match the Tryptophan repeat motif motif. One can recognise an RNase H type-1 domain in the interval 1048–1171 (IPKEDVYYVD…IDKLVSQGMR (124 aa)). Mg(2+) contacts are provided by Asp1057, Glu1092, Asp1112, and Asp1163. An Integrase-type zinc finger spans residues 1177 to 1218 (EKIEEAQEEHERYHNNWRNLADTYGLPQIVAKEIVAMCPKCQ). Zn(2+) is bound by residues His1186, His1190, Cys1214, and Cys1217. The Integrase catalytic domain occupies 1228–1378 (VDASPGVWQM…TPAERLINMI (151 aa)). Mg(2+) is bound by residues Asp1238 and Asp1290. The segment at residues 1397–1444 (FRVYYREGRDPVWKGPGQLIWKGEGAVVIKGGVELKEYPRRKAKIIKD) is a DNA-binding region (integrase-type).

As to quaternary structure, homotrimer. Interacts with gp41 (via C-terminus). Homodimer. The active site consists of two apposed aspartic acid residues. In terms of assembly, heterodimer of p66 RT and p51 RT (RT p66/p51). Heterodimerization of RT is essential for DNA polymerase activity. Despite the sequence identities, p66 RT and p51 RT have distinct folding. As to quaternary structure, homotetramer; may further associate as a homohexadecamer. The cofactor is Mg(2+). In terms of processing, specific enzymatic cleavages by the viral protease yield mature proteins. The protease is released by autocatalytic cleavage. The polyprotein is cleaved during and after budding, this process is termed maturation. Proteolytic cleavage of p66 RT removes the RNase H domain to yield the p51 RT subunit. Capsid protein p24 is phosphorylated.

The protein localises to the virion. Its subcellular location is the host nucleus. The protein resides in the host cytoplasm. It localises to the host cell membrane. It catalyses the reaction Specific for a P1 residue that is hydrophobic, and P1' variable, but often Pro.. The catalysed reaction is Endohydrolysis of RNA in RNA/DNA hybrids. Three different cleavage modes: 1. sequence-specific internal cleavage of RNA. Human immunodeficiency virus type 1 and Moloney murine leukemia virus enzymes prefer to cleave the RNA strand one nucleotide away from the RNA-DNA junction. 2. RNA 5'-end directed cleavage 13-19 nucleotides from the RNA end. 3. DNA 3'-end directed cleavage 15-20 nucleotides away from the primer terminus.. It carries out the reaction 3'-end directed exonucleolytic cleavage of viral RNA-DNA hybrid.. The enzyme catalyses DNA(n) + a 2'-deoxyribonucleoside 5'-triphosphate = DNA(n+1) + diphosphate. Its activity is regulated as follows. The viral protease is inhibited by many synthetic protease inhibitors (PIs), such as amprenavir, atazanavir, indinavir, loprinavir, nelfinavir, ritonavir and saquinavir. RT can be inhibited either by nucleoside RT inhibitors (NRTIs) or by non nucleoside RT inhibitors (NNRTIs). NRTIs act as chain terminators, whereas NNRTIs inhibit DNA polymerization by binding a small hydrophobic pocket near the RT active site and inducing an allosteric change in this region. Classical NRTIs are abacavir, adefovir (PMEA), didanosine (ddI), lamivudine (3TC), stavudine (d4T), tenofovir (PMPA), zalcitabine (ddC), and zidovudine (AZT). Classical NNRTIs are atevirdine (BHAP U-87201E), delavirdine, efavirenz (DMP-266), emivirine (I-EBU), and nevirapine (BI-RG-587). The tritherapies used as a basic effective treatment of AIDS associate two NRTIs and one NNRTI. Use of protease inhibitors in tritherapy regimens permit more ambitious therapeutic strategies. Functionally, gag-Pol polyprotein and Gag polyprotein may regulate their own translation, by the binding genomic RNA in the 5'-UTR. At low concentration, Gag-Pol and Gag would promote translation, whereas at high concentration, the polyproteins encapsidate genomic RNA and then shut off translation. Matrix protein p17 has two main functions: in infected cell, it targets Gag and Gag-pol polyproteins to the plasma membrane via a multipartite membrane-binding signal, that includes its myristointegration complex. The myristoylation signal and the NLS exert conflicting influences its subcellular localization. The key regulation of these motifs might be phosphorylation of a portion of MA molecules on the C-terminal tyrosine at the time of virus maturation, by virion-associated cellular tyrosine kinase. Implicated in the release from host cell mediated by Vpu. Its function is as follows. Capsid protein p24 forms the conical core that encapsulates the genomic RNA-nucleocapsid complex in the virion. The core is constituted by capsid protein hexamer subunits. The core is disassembled soon after virion entry. Interaction with host PPIA/CYPA protects the virus from restriction by host TRIM5-alpha and from an unknown antiviral activity in host cells. This capsid restriction by TRIM5 is one of the factors which restricts SIV to the simian species. In terms of biological role, nucleocapsid protein p7 encapsulates and protects viral dimeric unspliced (genomic) RNA. Binds these RNAs through its zinc fingers. Facilitates rearangement of nucleic acid secondary structure during retrotranscription of genomic RNA. This capability is referred to as nucleic acid chaperone activity. Functionally, the aspartyl protease mediates proteolytic cleavages of Gag and Gag-Pol polyproteins during or shortly after the release of the virion from the plasma membrane. Cleavages take place as an ordered, step-wise cascade to yield mature proteins. This process is called maturation. Displays maximal activity during the budding process just prior to particle release from the cell. Also cleaves Nef and Vif, probably concomitantly with viral structural proteins on maturation of virus particles. Hydrolyzes host EIF4GI and PABP1 in order to shut off the capped cellular mRNA translation. The resulting inhibition of cellular protein synthesis serves to ensure maximal viral gene expression and to evade host immune response. Reverse transcriptase/ribonuclease H (RT) is a multifunctional enzyme that converts the viral dimeric RNA genome into dsDNA in the cytoplasm, shortly after virus entry into the cell. This enzyme displays a DNA polymerase activity that can copy either DNA or RNA templates, and a ribonuclease H (RNase H) activity that cleaves the RNA strand of RNA-DNA heteroduplexes in a partially processive 3' to 5' endonucleasic mode. Conversion of viral genomic RNA into dsDNA requires many steps. A tRNA binds to the primer-binding site (PBS) situated at the 5'-end of the viral RNA. RT uses the 3' end of the tRNA primer to perform a short round of RNA-dependent minus-strand DNA synthesis. The reading proceeds through the U5 region and ends after the repeated (R) region which is present at both ends of viral RNA. The portion of the RNA-DNA heteroduplex is digested by the RNase H, resulting in a ssDNA product attached to the tRNA primer. This ssDNA/tRNA hybridizes with the identical R region situated at the 3' end of viral RNA. This template exchange, known as minus-strand DNA strong stop transfer, can be either intra- or intermolecular. RT uses the 3' end of this newly synthesized short ssDNA to perform the RNA-dependent minus-strand DNA synthesis of the whole template. RNase H digests the RNA template except for two polypurine tracts (PPTs) situated at the 5'-end and near the center of the genome. It is not clear if both polymerase and RNase H activities are simultaneous. RNase H can probably proceed both in a polymerase-dependent (RNA cut into small fragments by the same RT performing DNA synthesis) and a polymerase-independent mode (cleavage of remaining RNA fragments by free RTs). Secondly, RT performs DNA-directed plus-strand DNA synthesis using the PPTs that have not been removed by RNase H as primers. PPTs and tRNA primers are then removed by RNase H. The 3' and 5' ssDNA PBS regions hybridize to form a circular dsDNA intermediate. Strand displacement synthesis by RT to the PBS and PPT ends produces a blunt ended, linear dsDNA copy of the viral genome that includes long terminal repeats (LTRs) at both ends. Its function is as follows. Integrase catalyzes viral DNA integration into the host chromosome, by performing a series of DNA cutting and joining reactions. This enzyme activity takes place after virion entry into a cell and reverse transcription of the RNA genome in dsDNA. The first step in the integration process is 3' processing. This step requires a complex comprising the viral genome, matrix protein, Vpr and integrase. This complex is called the pre-integration complex (PIC). The integrase protein removes 2 nucleotides from each 3' end of the viral DNA, leaving recessed CA OH's at the 3' ends. In the second step, the PIC enters cell nucleus. This process is mediated through integrase and Vpr proteins, and allows the virus to infect a non dividing cell. This ability to enter the nucleus is specific of lentiviruses, other retroviruses cannot and rely on cell division to access cell chromosomes. In the third step, termed strand transfer, the integrase protein joins the previously processed 3' ends to the 5' ends of strands of target cellular DNA at the site of integration. The 5'-ends are produced by integrase-catalyzed staggered cuts, 5 bp apart. A Y-shaped, gapped, recombination intermediate results, with the 5'-ends of the viral DNA strands and the 3' ends of target DNA strands remaining unjoined, flanking a gap of 5 bp. The last step is viral DNA integration into host chromosome. This involves host DNA repair synthesis in which the 5 bp gaps between the unjoined strands are filled in and then ligated. Since this process occurs at both cuts flanking the SIV genome, a 5 bp duplication of host DNA is produced at the ends of SIV integration. Alternatively, Integrase may catalyze the excision of viral DNA just after strand transfer, this is termed disintegration. The sequence is that of Gag-Pol polyprotein (gag-pol) from Cercopithecidae (Old World monkeys).